The sequence spans 333 residues: Holliday junction branch migration complex subunit RuvB (333 aa).

The large ATPase domain (RuvB-L) stretch occupies residues 1-182; it reads MEERMVSAEA…FGVMARLEYY (182 aa). Residues I21, R22, G63, K66, T67, T68, 129–131, R172, Y182, and R219 each bind ATP; that span reads EDY. T67 provides a ligand contact to Mg(2+). Positions 183-253 are small ATPAse domain (RuvB-S); sequence NVEELTTIIE…RAIESLERLQ (71 aa). Positions 256-333 are head domain (RuvB-H); it reads RLGLDHIDHK…EHFNMEVPNK (78 aa). DNA contacts are provided by R311 and R316.

It belongs to the RuvB family. As to quaternary structure, homohexamer. Forms an RuvA(8)-RuvB(12)-Holliday junction (HJ) complex. HJ DNA is sandwiched between 2 RuvA tetramers; dsDNA enters through RuvA and exits via RuvB. An RuvB hexamer assembles on each DNA strand where it exits the tetramer. Each RuvB hexamer is contacted by two RuvA subunits (via domain III) on 2 adjacent RuvB subunits; this complex drives branch migration. In the full resolvosome a probable DNA-RuvA(4)-RuvB(12)-RuvC(2) complex forms which resolves the HJ.

The protein resides in the cytoplasm. It carries out the reaction ATP + H2O = ADP + phosphate + H(+). Functionally, the RuvA-RuvB-RuvC complex processes Holliday junction (HJ) DNA during genetic recombination and DNA repair, while the RuvA-RuvB complex plays an important role in the rescue of blocked DNA replication forks via replication fork reversal (RFR). RuvA specifically binds to HJ cruciform DNA, conferring on it an open structure. The RuvB hexamer acts as an ATP-dependent pump, pulling dsDNA into and through the RuvAB complex. RuvB forms 2 homohexamers on either side of HJ DNA bound by 1 or 2 RuvA tetramers; 4 subunits per hexamer contact DNA at a time. Coordinated motions by a converter formed by DNA-disengaged RuvB subunits stimulates ATP hydrolysis and nucleotide exchange. Immobilization of the converter enables RuvB to convert the ATP-contained energy into a lever motion, pulling 2 nucleotides of DNA out of the RuvA tetramer per ATP hydrolyzed, thus driving DNA branch migration. The RuvB motors rotate together with the DNA substrate, which together with the progressing nucleotide cycle form the mechanistic basis for DNA recombination by continuous HJ branch migration. Branch migration allows RuvC to scan DNA until it finds its consensus sequence, where it cleaves and resolves cruciform DNA. The sequence is that of Holliday junction branch migration complex subunit RuvB from Halalkalibacterium halodurans (strain ATCC BAA-125 / DSM 18197 / FERM 7344 / JCM 9153 / C-125) (Bacillus halodurans).